Consider the following 55-residue polypeptide: Cytochrome b-c1 complex subunit 9 (55 aa).

Residues 1–15 lie on the Mitochondrial matrix side of the membrane; sequence MKVIYNTLFKRTSTY. A helical membrane pass occupies residues 16–41; it reads AVAIIASAFFFERALDVTSVAIFEGI. Topologically, residues 42-55 are chloroplast intermembrane; that stretch reads NKGKLWKDIKGKYE.

This sequence belongs to the UQCR10/QCR9 family. As to quaternary structure, component of the ubiquinol-cytochrome c oxidoreductase (cytochrome b-c1 complex, complex III, CIII), a multisubunit enzyme composed of 3 respiratory subunits cytochrome b, cytochrome c1 and Rieske protein, 2 core protein subunits, and additional low-molecular weight protein subunits. The complex exists as an obligatory dimer and forms supercomplexes (SCs) in the inner mitochondrial membrane with cytochrome c oxidase (complex IV, CIV).

Its subcellular location is the mitochondrion inner membrane. Component of the ubiquinol-cytochrome c oxidoreductase, a multisubunit transmembrane complex that is part of the mitochondrial electron transport chain which drives oxidative phosphorylation. The respiratory chain contains 3 multisubunit complexes succinate dehydrogenase (complex II, CII), ubiquinol-cytochrome c oxidoreductase (cytochrome b-c1 complex, complex III, CIII) and cytochrome c oxidase (complex IV, CIV), that cooperate to transfer electrons derived from NADH and succinate to molecular oxygen, creating an electrochemical gradient over the inner membrane that drives transmembrane transport and the ATP synthase. The cytochrome b-c1 complex catalyzes electron transfer from ubiquinol to cytochrome c, linking this redox reaction to translocation of protons across the mitochondrial inner membrane, with protons being carried across the membrane as hydrogens on the quinol. In the process called Q cycle, 2 protons are consumed from the matrix, 4 protons are released into the intermembrane space and 2 electrons are passed to cytochrome c. The polypeptide is Cytochrome b-c1 complex subunit 9 (ox) (Drosophila melanogaster (Fruit fly)).